The primary structure comprises 333 residues: Fructose-1,6-bisphosphatase class 1 1 (333 aa).

Glutamate 81, aspartate 100, leucine 102, and aspartate 103 together coordinate Mg(2+). Substrate contacts are provided by residues 103–106 (DGSS) and asparagine 191. Glutamate 263 is a Mg(2+) binding site.

It belongs to the FBPase class 1 family. Homotetramer. Requires Mg(2+) as cofactor.

Its subcellular location is the cytoplasm. It carries out the reaction beta-D-fructose 1,6-bisphosphate + H2O = beta-D-fructose 6-phosphate + phosphate. It participates in carbohydrate biosynthesis; Calvin cycle. The protein is Fructose-1,6-bisphosphatase class 1 1 of Cereibacter sphaeroides (strain ATCC 17029 / ATH 2.4.9) (Rhodobacter sphaeroides).